The following is a 417-amino-acid chain: Serine hydroxymethyltransferase (417 aa).

Residues Leu-121 and Gly-125–Leu-127 contribute to the (6S)-5,6,7,8-tetrahydrofolate site. The residue at position 229 (Lys-229) is an N6-(pyridoxal phosphate)lysine. Residue Ser-355–Phe-357 coordinates (6S)-5,6,7,8-tetrahydrofolate.

The protein belongs to the SHMT family. In terms of assembly, homodimer. Requires pyridoxal 5'-phosphate as cofactor.

It localises to the cytoplasm. The enzyme catalyses (6R)-5,10-methylene-5,6,7,8-tetrahydrofolate + glycine + H2O = (6S)-5,6,7,8-tetrahydrofolate + L-serine. Its pathway is one-carbon metabolism; tetrahydrofolate interconversion. It functions in the pathway amino-acid biosynthesis; glycine biosynthesis; glycine from L-serine: step 1/1. Catalyzes the reversible interconversion of serine and glycine with tetrahydrofolate (THF) serving as the one-carbon carrier. This reaction serves as the major source of one-carbon groups required for the biosynthesis of purines, thymidylate, methionine, and other important biomolecules. Also exhibits THF-independent aldolase activity toward beta-hydroxyamino acids, producing glycine and aldehydes, via a retro-aldol mechanism. This Aeromonas hydrophila subsp. hydrophila (strain ATCC 7966 / DSM 30187 / BCRC 13018 / CCUG 14551 / JCM 1027 / KCTC 2358 / NCIMB 9240 / NCTC 8049) protein is Serine hydroxymethyltransferase.